Consider the following 253-residue polypeptide: uncharacterized protein (253 aa).

In terms of domain architecture, BPL/LPL catalytic spans 30–236 (AQGRQVAQLW…AVDDDAALMA (207 aa)).

This is an uncharacterized protein from Cupriavidus necator (strain ATCC 17699 / DSM 428 / KCTC 22496 / NCIMB 10442 / H16 / Stanier 337) (Ralstonia eutropha).